A 121-amino-acid chain; its full sequence is Ig heavy chain V region MPC 11 (121 aa).

The Ig-like domain maps to 1 to 112; it reads EAQLQQSGAE…NSSPYFDSWG (112 aa).

This Mus musculus (Mouse) protein is Ig heavy chain V region MPC 11.